We begin with the raw amino-acid sequence, 222 residues long: Ribosomal RNA small subunit methyltransferase G (222 aa).

S-adenosyl-L-methionine-binding positions include Gly84, Phe89, 141 to 142, and Arg154; that span reads VE.

The protein belongs to the methyltransferase superfamily. RNA methyltransferase RsmG family.

Its subcellular location is the cytoplasm. It catalyses the reaction guanosine(527) in 16S rRNA + S-adenosyl-L-methionine = N(7)-methylguanosine(527) in 16S rRNA + S-adenosyl-L-homocysteine. Its function is as follows. Specifically methylates the N7 position of guanine in position 527 of 16S rRNA. This is Ribosomal RNA small subunit methyltransferase G from Bradyrhizobium sp. (strain ORS 278).